The following is a 258-amino-acid chain: 5-oxoprolinase subunit A (258 aa).

This sequence belongs to the LamB/PxpA family. Forms a complex composed of PxpA, PxpB and PxpC.

The enzyme catalyses 5-oxo-L-proline + ATP + 2 H2O = L-glutamate + ADP + phosphate + H(+). Catalyzes the cleavage of 5-oxoproline to form L-glutamate coupled to the hydrolysis of ATP to ADP and inorganic phosphate. The chain is 5-oxoprolinase subunit A from Deinococcus radiodurans (strain ATCC 13939 / DSM 20539 / JCM 16871 / CCUG 27074 / LMG 4051 / NBRC 15346 / NCIMB 9279 / VKM B-1422 / R1).